Reading from the N-terminus, the 544-residue chain is Chaperonin GroEL (544 aa).

Residues 30–33 (TLGP), K51, 87–91 (DGTTT), G415, 478–480 (DVA), and D494 contribute to the ATP site. A disordered region spans residues 524–544 (PEKEKKPATPAGAGGMGDMEY). A compositionally biased stretch (gly residues) spans 535 to 544 (GAGGMGDMEY).

It belongs to the chaperonin (HSP60) family. In terms of assembly, forms a cylinder of 14 subunits composed of two heptameric rings stacked back-to-back. Interacts with the co-chaperonin GroES.

The protein resides in the cytoplasm. The enzyme catalyses ATP + H2O + a folded polypeptide = ADP + phosphate + an unfolded polypeptide.. Together with its co-chaperonin GroES, plays an essential role in assisting protein folding. The GroEL-GroES system forms a nano-cage that allows encapsulation of the non-native substrate proteins and provides a physical environment optimized to promote and accelerate protein folding. The chain is Chaperonin GroEL from Methylacidiphilum infernorum (isolate V4) (Methylokorus infernorum (strain V4)).